Reading from the N-terminus, the 636-residue chain is MGKVVGIDLGTTNSEVAVMQGGEPVVIPSAEGSTLIPSVVAINKNGERIVGRQAKNQAILNPENTVYSIKRFMGRKWGEPAGRELPVEADAKRKPYKVIQGNNNEVRVVMGDKDFSPPEVSAMILQKLKSDAEAYLGEKVTEAVITVPAYFNDAQRQATKDAGAIAGLKVLRIINEPTAAALAYGLDKKKDETIAVYDLGGGTFDISILELGEGTFQVKSTAGDTHLGGDDFDQKIIDWLIAEYKKDQGIDLSKDKTALQRLKEAAEKAKIELSTVQQTEINLPFITADASGPKHLNIILTRSKLEQMVMDLVEKSLEPCRQALKDSGKTSAEINEVILVGGQTRMPLVQQKVKDFFGKEPNKGVNPDEVVAIGAAIQAGVLKGEVSDVLLLDVIPLTLGIETLGGVSTALITRNTTIPTSKSQVFSTAADNQPSVEIHVLQGERPMAADNRTLGRFMLDGILPAPRGVPQIEVTFDIDANGMLSVKAKDKGTGREQKITITASSGLSKEEVEKMTREAEAHAVEDTKRKEEIEARNVADNLAYNAEKTLRDNKDKIPAELNTELESKIAAVRTALQGNDVEAIKKTTQELSTALQSVGSAVYGKQQEGAPAQEEPSAEGKKADDEGTVEGEFREV.

Thr-203 is modified (phosphothreonine; by autocatalysis). The tract at residues 602 to 636 is disordered; it reads VYGKQQEGAPAQEEPSAEGKKADDEGTVEGEFREV. Residues 618–636 show a composition bias toward basic and acidic residues; sequence AEGKKADDEGTVEGEFREV.

Belongs to the heat shock protein 70 family.

Acts as a chaperone. The sequence is that of Chaperone protein DnaK from Dehalococcoides mccartyi (strain CBDB1).